The following is a 69-amino-acid chain: Defensin-like protein 166 (69 aa).

The N-terminal stretch at 1–15 is a signal peptide; sequence MIIVIIFLVIYFNNQ. 4 disulfides stabilise this stretch: cysteine 19–cysteine 68, cysteine 24–cysteine 44, cysteine 29–cysteine 62, and cysteine 33–cysteine 64.

The protein belongs to the DEFL family.

The protein localises to the secreted. This is Defensin-like protein 166 from Arabidopsis thaliana (Mouse-ear cress).